A 697-amino-acid chain; its full sequence is PHD finger protein At2g01810 (697 aa).

Disordered regions lie at residues 319–362 and 457–478; these read DENS…QYYS and EQKR…TSTT. Over residues 339 to 349 the composition is skewed to basic and acidic residues; the sequence is SGRDTVLDDHN. The PHD-type zinc-finger motif lies at 635–685; sequence TVDCKCGARDDDGERMVACDACKVWHHTLCNSIEDDEAVPSVFLCNMCYGD.

It localises to the nucleus. This is PHD finger protein At2g01810 from Arabidopsis thaliana (Mouse-ear cress).